The chain runs to 321 residues: Probable protein phosphatase 2C 44 (321 aa).

Disordered regions lie at residues methionine 1–lysine 36 and asparagine 51–threonine 70. The span at serine 9–alanine 31 shows a compositional bias: low complexity. Positions asparagine 51–valine 69 are enriched in polar residues. The PPM-type phosphatase domain occupies threonine 70–phenylalanine 319. Mn(2+) contacts are provided by aspartate 107, glycine 108, aspartate 271, and aspartate 310.

Belongs to the PP2C family. Mg(2+) is required as a cofactor. It depends on Mn(2+) as a cofactor.

The catalysed reaction is O-phospho-L-seryl-[protein] + H2O = L-seryl-[protein] + phosphate. It carries out the reaction O-phospho-L-threonyl-[protein] + H2O = L-threonyl-[protein] + phosphate. The polypeptide is Probable protein phosphatase 2C 44 (Oryza sativa subsp. japonica (Rice)).